The following is a 277-amino-acid chain: Putative gamma-glutamylcyclotransferase YkqA (277 aa).

8–11 contacts substrate; the sequence is YGTL. The active-site Proton acceptor is the E205.

It belongs to the gamma-glutamylcyclotransferase family.

In terms of biological role, putative gamma-glutamylcyclotransferase. The polypeptide is Putative gamma-glutamylcyclotransferase YkqA (ykqA) (Bacillus subtilis (strain 168)).